The primary structure comprises 127 residues: Holo-[acyl-carrier-protein] synthase (127 aa).

Asp-9 and Glu-58 together coordinate Mg(2+).

This sequence belongs to the P-Pant transferase superfamily. AcpS family. Requires Mg(2+) as cofactor.

Its subcellular location is the cytoplasm. The enzyme catalyses apo-[ACP] + CoA = holo-[ACP] + adenosine 3',5'-bisphosphate + H(+). Functionally, transfers the 4'-phosphopantetheine moiety from coenzyme A to a Ser of acyl-carrier-protein. The protein is Holo-[acyl-carrier-protein] synthase of Shewanella sp. (strain ANA-3).